Here is a 225-residue protein sequence, read N- to C-terminus: C-reactive protein (225 aa).

Positions 1-18 (MLVVFLCLLSVTLEATEG) are cleaved as a signal peptide. In terms of domain architecture, Pentraxin (PTX) spans 23–225 (SGKVLQFKTA…TGNVLVATDN (203 aa)). Cysteine 54 and cysteine 116 are disulfide-bonded. The Ca(2+) site is built by aspartate 78, aspartate 157, proline 158, aspartate 159, and glutamine 169.

The protein belongs to the pentraxin family. As to quaternary structure, homotrimer. It depends on Ca(2+) as a cofactor.

The protein resides in the secreted. Displays several functions associated with host defense: it promotes agglutination, bacterial capsular swelling, phagocytosis, and complement fixation through its calcium-dependent binding to phosphorylcholine. This is C-reactive protein from Danio rerio (Zebrafish).